The following is a 269-amino-acid chain: Aminoglycoside (3'') (9) adenylyltransferase (269 aa).

It catalyses the reaction streptomycin + ATP = 3''-O-adenylylstreptomycin + diphosphate. It carries out the reaction spectinomycin + ATP = 9-O-adenylylspectinomycin + diphosphate. Functionally, mediates bacterial resistance to the antibiotic spectinomycin and probably also to streptomycin. The polypeptide is Aminoglycoside (3'') (9) adenylyltransferase (Rhizobium radiobacter (Agrobacterium tumefaciens)).